Consider the following 83-residue polypeptide: U1-theraphotoxin-Hs1f (83 aa).

The signal sequence occupies residues 1–21 (MKVTLIAILTCAAVLVLHTTA). Positions 22–48 (AEELEESQLMEVGMPDTELAAVDEERL) are excised as a propeptide. 3 cysteine pairs are disulfide-bonded: C51–C64, C55–C75, and C69–C80.

Belongs to the neurotoxin 12 (Hwtx-2) family. 02 (Hwtx-2) subfamily. In terms of tissue distribution, expressed by the venom gland.

It is found in the secreted. Its function is as follows. Lethal neurotoxin that blocks neuromuscular transmission. The polypeptide is U1-theraphotoxin-Hs1f (Cyriopagopus schmidti (Chinese bird spider)).